The chain runs to 113 residues: Large ribosomal subunit protein eL31 (113 aa).

It belongs to the eukaryotic ribosomal protein eL31 family. As to quaternary structure, component of the large ribosomal subunit (LSU). Mature yeast ribosomes consist of a small (40S) and a large (60S) subunit. The 40S small subunit contains 1 molecule of ribosomal RNA (18S rRNA) and at least 33 different proteins. The large 60S subunit contains 3 rRNA molecules (25S, 5.8S and 5S rRNA) and at least 46 different proteins.

It localises to the cytoplasm. Component of the ribosome, a large ribonucleoprotein complex responsible for the synthesis of proteins in the cell. The small ribosomal subunit (SSU) binds messenger RNAs (mRNAs) and translates the encoded message by selecting cognate aminoacyl-transfer RNA (tRNA) molecules. The large subunit (LSU) contains the ribosomal catalytic site termed the peptidyl transferase center (PTC), which catalyzes the formation of peptide bonds, thereby polymerizing the amino acids delivered by tRNAs into a polypeptide chain. The nascent polypeptides leave the ribosome through a tunnel in the LSU and interact with protein factors that function in enzymatic processing, targeting, and the membrane insertion of nascent chains at the exit of the ribosomal tunnel. The sequence is that of Large ribosomal subunit protein eL31 (rpl31) from Schizosaccharomyces pombe (strain 972 / ATCC 24843) (Fission yeast).